Reading from the N-terminus, the 259-residue chain is Global transcriptional regulator CodY (259 aa).

The tract at residues 1 to 155 (MNLLEKTRQL…SATVVGMEIL (155 aa)) is GAF domain. Positions 203-222 (ASKIADRVGITRSVIVNALR) form a DNA-binding region, H-T-H motif.

The protein belongs to the CodY family.

It is found in the cytoplasm. Functionally, DNA-binding global transcriptional regulator which is involved in the adaptive response to starvation and acts by directly or indirectly controlling the expression of numerous genes in response to nutrient availability. During rapid exponential growth, CodY is highly active and represses genes whose products allow adaptation to nutrient depletion. This Exiguobacterium sp. (strain ATCC BAA-1283 / AT1b) protein is Global transcriptional regulator CodY.